The sequence spans 448 residues: UDP-N-acetylmuramoylalanine--D-glutamate ligase (448 aa).

116–122 serves as a coordination point for ATP; that stretch reads GSNAKST.

The protein belongs to the MurCDEF family.

The protein localises to the cytoplasm. It catalyses the reaction UDP-N-acetyl-alpha-D-muramoyl-L-alanine + D-glutamate + ATP = UDP-N-acetyl-alpha-D-muramoyl-L-alanyl-D-glutamate + ADP + phosphate + H(+). It functions in the pathway cell wall biogenesis; peptidoglycan biosynthesis. Functionally, cell wall formation. Catalyzes the addition of glutamate to the nucleotide precursor UDP-N-acetylmuramoyl-L-alanine (UMA). This is UDP-N-acetylmuramoylalanine--D-glutamate ligase from Pseudomonas syringae pv. tomato (strain ATCC BAA-871 / DC3000).